We begin with the raw amino-acid sequence, 350 residues long: Neurogenic differentiation factor 1 (350 aa).

A disordered region spans residues 1-91 (MTKSYSEESM…KKKKMTKARM (91 aa)). The segment covering 7-18 (EESMMLESQSSS) has biased composition (low complexity). The span at 22 to 38 (DKCHSSSQDERDVDKTS) shows a compositional bias: basic and acidic residues. A compositionally biased stretch (acidic residues) spans 44-72 (DMEDDDDAGLNRLEDEDDEEEEEEEEDGD). Positions 76 to 91 (PKRRGPKKKKMTKARM) are enriched in basic residues. Positions 82 to 88 (KKKKMTK) match the Nuclear localization signal motif. The 53-residue stretch at 96-148 (MRRMKANARERNRMHGLNDALESLRKVVPCYSKTQKLSKIETLRLAKNYIWAL) folds into the bHLH domain.

As to quaternary structure, efficient DNA binding requires dimerization with another bHLH protein. In the embryo, expressed broadly in a subset of primary neurons in the brain and spinal cord. At 28 hours post-fertilization (hpf), regions of expression include telencephalon, olfactory placode, epiphysis, cranial ganglia, acoustic ganglia, Rohon-Beard mechano-sensory neurons and motoneurons. In 2 day postembryonic brain, expressed in many brain regions but absent from subpallium, the ventral preoptic region, ventral thalamus and hypothalamus; sites of expression extend laterally from the ventricular proliferative regions and correspond to freshly determined cell populations. In adult, expressed in all tissues examined with highest levels in brain.

It localises to the cytoplasm. Its subcellular location is the nucleus. Functionally, may act as a transcriptional activator. Differentiation factor required for neurogenesis. Acts as an upstream activator of isl1. The polypeptide is Neurogenic differentiation factor 1 (Danio rerio (Zebrafish)).